Here is a 491-residue protein sequence, read N- to C-terminus: MTTQPAVPAAVIVLAAGEGTRMRSATPKVLHPLGGRPLVGHALRAARGTAPEHLVVVLRHQADRVREALAGDFPSVLVALQDDVPGTGRAVQCALEALPADLSGTVLVTYGDVPLLSSATLQRLAGAHAAGGNAVTVLTALLADPTGYGRVLRDGTGVTGIVEQKDATAEQLAVREVNSGVYAFEAAALRESLGRVGRDNAAGEVYLTDVLSLVRAAGGRVEALALEDEWEIRGVNDRAQLADLAAEANRRTLRRWMLAGVTIADPATTWIDADVELAPDVTIRPGVQLHGTTRVATGAVVGPDSTLTDVEVGAGALVERTHGSSAVVGEGAQVGPFAFLRPGTRLGAEGKIGTFVETKNATIGRGSKVPHLSYVGDATIGEHSNIGAASVFVNYDGVNKARTTVGDHVRMGSDNMYVAPVTVGDGAYSGAGTVIRKDVPAGALAINVAPQRNLEGWTLAKRPGTPAAEAAQRANDESTGTTASTDREIQP.

The interval 1-238 (MTTQPAVPAA…EWEIRGVNDR (238 aa)) is pyrophosphorylase. Residues 14–17 (LAAG), Lys-28, Gln-81, 86–87 (GT), 110–112 (YGD), Gly-149, Glu-163, Asn-178, and Asn-236 each bind UDP-N-acetyl-alpha-D-glucosamine. Asp-112 lines the Mg(2+) pocket. Asn-236 lines the Mg(2+) pocket. The interval 239 to 259 (AQLADLAAEANRRTLRRWMLA) is linker. The segment at 260–491 (GVTIADPATT…TASTDREIQP (232 aa)) is N-acetyltransferase. Arg-341 and Lys-359 together coordinate UDP-N-acetyl-alpha-D-glucosamine. His-371 acts as the Proton acceptor in catalysis. 2 residues coordinate UDP-N-acetyl-alpha-D-glucosamine: Tyr-374 and Asn-385. Acetyl-CoA is bound by residues Ala-388, 394 to 395 (NY), Ser-413, and Ala-431. The interval 460–491 (AKRPGTPAAEAAQRANDESTGTTASTDREIQP) is disordered.

It in the N-terminal section; belongs to the N-acetylglucosamine-1-phosphate uridyltransferase family. The protein in the C-terminal section; belongs to the transferase hexapeptide repeat family. Homotrimer. Mg(2+) serves as cofactor.

Its subcellular location is the cytoplasm. It catalyses the reaction alpha-D-glucosamine 1-phosphate + acetyl-CoA = N-acetyl-alpha-D-glucosamine 1-phosphate + CoA + H(+). The catalysed reaction is N-acetyl-alpha-D-glucosamine 1-phosphate + UTP + H(+) = UDP-N-acetyl-alpha-D-glucosamine + diphosphate. Its pathway is nucleotide-sugar biosynthesis; UDP-N-acetyl-alpha-D-glucosamine biosynthesis; N-acetyl-alpha-D-glucosamine 1-phosphate from alpha-D-glucosamine 6-phosphate (route II): step 2/2. It participates in nucleotide-sugar biosynthesis; UDP-N-acetyl-alpha-D-glucosamine biosynthesis; UDP-N-acetyl-alpha-D-glucosamine from N-acetyl-alpha-D-glucosamine 1-phosphate: step 1/1. It functions in the pathway bacterial outer membrane biogenesis; LPS lipid A biosynthesis. Functionally, catalyzes the last two sequential reactions in the de novo biosynthetic pathway for UDP-N-acetylglucosamine (UDP-GlcNAc). The C-terminal domain catalyzes the transfer of acetyl group from acetyl coenzyme A to glucosamine-1-phosphate (GlcN-1-P) to produce N-acetylglucosamine-1-phosphate (GlcNAc-1-P), which is converted into UDP-GlcNAc by the transfer of uridine 5-monophosphate (from uridine 5-triphosphate), a reaction catalyzed by the N-terminal domain. The chain is Bifunctional protein GlmU from Kineococcus radiotolerans (strain ATCC BAA-149 / DSM 14245 / SRS30216).